A 145-amino-acid polypeptide reads, in one-letter code: Transcription antitermination protein NusB (145 aa).

Belongs to the NusB family.

Involved in transcription antitermination. Required for transcription of ribosomal RNA (rRNA) genes. Binds specifically to the boxA antiterminator sequence of the ribosomal RNA (rrn) operons. This chain is Transcription antitermination protein NusB, found in Acetivibrio thermocellus (strain ATCC 27405 / DSM 1237 / JCM 9322 / NBRC 103400 / NCIMB 10682 / NRRL B-4536 / VPI 7372) (Clostridium thermocellum).